Here is a 406-residue protein sequence, read N- to C-terminus: COP9 signalosome complex subunit 4 (406 aa).

Positions 197–366 (YRRKFIEAAQ…GIVHFETREP (170 aa)) constitute a PCI domain.

The protein belongs to the CSN4 family. As to quaternary structure, component of the CSN complex, probably composed of cops1, cops2, cops3, cops4, cops5, cops6, cops7, cops8 and cops9.

The protein localises to the cytoplasm. It is found in the nucleus. Its subcellular location is the cytoplasmic vesicle. It localises to the secretory vesicle. The protein resides in the synaptic vesicle. Component of the COP9 signalosome complex (CSN), a complex involved in various cellular and developmental processes. The CSN complex is an essential regulator of the ubiquitin (Ubl) conjugation pathway by mediating the deneddylation of the cullin subunits of E3 ligase complexes, leading to modify the Ubl ligase activity. This is COP9 signalosome complex subunit 4 (cops4) from Danio rerio (Zebrafish).